The following is an 825-amino-acid chain: Fibrous sheath CABYR-binding protein (825 aa).

Disordered regions lie at residues 1–43 (MVGK…SYSA) and 113–139 (QDVE…RTGY). A compositionally biased stretch (polar residues) spans 21-40 (KSSSPKATHRIGNTSGSKGS). S160 is subject to Phosphoserine. Disordered regions lie at residues 168-232 (SRPD…LLED), 244-718 (QEGS…DKHS), and 732-751 (GEAS…EDEA). Over residues 200–220 (PATNSNEEIGQKNISRTSFTQ) the composition is skewed to polar residues. A compositionally biased stretch (basic and acidic residues) spans 277–290 (ATAKAEPRPAEETH). Low complexity-rich tracts occupy residues 348 to 357 (AEILPPSAEE) and 398 to 407 (PLPAEGALEE). Pro residues predominate over residues 610-676 (VQPPPAEEAP…PAEVQPPPAE (67 aa)).

In terms of assembly, interacts with CABYR. Interacts with ROPN1 and ROPN1L; the interaction increases upon spermatozoa capacitation conditions. Post-translationally, phosphorylated by PKA upon spermatozoa capacitation conditions.

The protein localises to the cell projection. The protein resides in the cilium. It is found in the flagellum. Functionally, may be involved in the later stages of fibrous sheath biogenesis and spermatozoa capacitation. Inhibits ROPN1 and ROPN1L SUMOylation. Binds calcium. This is Fibrous sheath CABYR-binding protein (FSCB) from Homo sapiens (Human).